The sequence spans 165 residues: Cyclic pyranopterin monophosphate synthase (165 aa).

Substrate is bound by residues 76–78 (MCH) and 113–114 (IE). The active site involves Asp128.

It belongs to the MoaC family. In terms of assembly, homohexamer; trimer of dimers.

The enzyme catalyses (8S)-3',8-cyclo-7,8-dihydroguanosine 5'-triphosphate = cyclic pyranopterin phosphate + diphosphate. Its pathway is cofactor biosynthesis; molybdopterin biosynthesis. In terms of biological role, catalyzes the conversion of (8S)-3',8-cyclo-7,8-dihydroguanosine 5'-triphosphate to cyclic pyranopterin monophosphate (cPMP). This is Cyclic pyranopterin monophosphate synthase from Limosilactobacillus fermentum (strain NBRC 3956 / LMG 18251) (Lactobacillus fermentum).